Here is a 446-residue protein sequence, read N- to C-terminus: Maltoporin (446 aa).

Positions 1-25 (MMITLRKLPLAVAVAAGVMSAQAMA) are cleaved as a signal peptide.

It belongs to the porin LamB (TC 1.B.3) family. As to quaternary structure, homotrimer formed of three 18-stranded antiparallel beta-barrels, containing three independent channels.

Its subcellular location is the cell outer membrane. The catalysed reaction is beta-maltose(in) = beta-maltose(out). Its function is as follows. Involved in the transport of maltose and maltodextrins. This chain is Maltoporin, found in Escherichia coli O157:H7 (strain EC4115 / EHEC).